The sequence spans 98 residues: Alpha-elicitin MGM-alpha (98 aa).

3 cysteine pairs are disulfide-bonded: Cys-3–Cys-71, Cys-27–Cys-56, and Cys-51–Cys-95.

The protein belongs to the elicitin family.

Its subcellular location is the secreted. Its function is as follows. Induces local and distal defense responses (incompatible hypersensitive reaction) in plants from the solanaceae and cruciferae families. Elicits leaf necrosis and causes the accumulation of pathogenesis-related proteins. Might interact with the lipidic molecules of the plasma membrane. The polypeptide is Alpha-elicitin MGM-alpha (Phytophthora megasperma (Potato pink rot fungus)).